The sequence spans 473 residues: Ribulose bisphosphate carboxylase large chain (473 aa).

Residues 1-2 (MS) constitute a propeptide that is removed on maturation. An N-acetylproline modification is found at Pro3. N6,N6,N6-trimethyllysine is present on Lys14. Positions 123 and 173 each coordinate substrate. Lys175 functions as the Proton acceptor in the catalytic mechanism. Lys177 contributes to the substrate binding site. The Mg(2+) site is built by Lys201, Asp203, and Glu204. Residue Lys201 is modified to N6-carboxylysine. His294 acts as the Proton acceptor in catalysis. Substrate is bound by residues Arg295, His327, and Ser379.

It belongs to the RuBisCO large chain family. Type I subfamily. As to quaternary structure, heterohexadecamer of 8 large chains and 8 small chains; disulfide-linked. The disulfide link is formed within the large subunit homodimers. It depends on Mg(2+) as a cofactor. The disulfide bond which can form in the large chain dimeric partners within the hexadecamer appears to be associated with oxidative stress and protein turnover.

It localises to the plastid. The protein localises to the chloroplast. It carries out the reaction 2 (2R)-3-phosphoglycerate + 2 H(+) = D-ribulose 1,5-bisphosphate + CO2 + H2O. It catalyses the reaction D-ribulose 1,5-bisphosphate + O2 = 2-phosphoglycolate + (2R)-3-phosphoglycerate + 2 H(+). In terms of biological role, ruBisCO catalyzes two reactions: the carboxylation of D-ribulose 1,5-bisphosphate, the primary event in carbon dioxide fixation, as well as the oxidative fragmentation of the pentose substrate in the photorespiration process. Both reactions occur simultaneously and in competition at the same active site. The protein is Ribulose bisphosphate carboxylase large chain of Sesbania sesban (Egyptian riverhemp).